Here is a 413-residue protein sequence, read N- to C-terminus: Aspartate aminotransferase, cytoplasmic (413 aa).

Residues glycine 39, tryptophan 141, and asparagine 195 each coordinate L-aspartate. Position 259 is an N6-(pyridoxal phosphate)lysine (lysine 259). Arginine 387 is an L-aspartate binding site.

The protein belongs to the class-I pyridoxal-phosphate-dependent aminotransferase family. In terms of assembly, homodimer. It depends on pyridoxal 5'-phosphate as a cofactor.

It is found in the cytoplasm. The catalysed reaction is L-aspartate + 2-oxoglutarate = oxaloacetate + L-glutamate. The enzyme catalyses L-cysteine + 2-oxoglutarate = 2-oxo-3-sulfanylpropanoate + L-glutamate. It catalyses the reaction (2S)-2-aminobutanoate + 2-oxoglutarate = 2-oxobutanoate + L-glutamate. It carries out the reaction 3-sulfino-L-alanine + 2-oxoglutarate = 3-sulfinopyruvate + L-glutamate. Biosynthesis of L-glutamate from L-aspartate or L-cysteine. Important regulator of levels of glutamate, the major excitatory neurotransmitter of the vertebrate central nervous system. Acts as a scavenger of glutamate in brain neuroprotection. The aspartate aminotransferase activity is involved in hepatic glucose synthesis during development and in adipocyte glyceroneogenesis. Using L-cysteine as substrate, regulates levels of mercaptopyruvate, an important source of hydrogen sulfide. Mercaptopyruvate is converted into H(2)S via the action of 3-mercaptopyruvate sulfurtransferase (3MST). Hydrogen sulfide is an important synaptic modulator and neuroprotectant in the brain. In Bos taurus (Bovine), this protein is Aspartate aminotransferase, cytoplasmic.